The chain runs to 586 residues: Urease subunit alpha (586 aa).

The Urease domain occupies 134–586 (GAIDTHIHFI…LPMAQRYFLF (453 aa)). The Ni(2+) site is built by histidine 139, histidine 141, and lysine 222. The residue at position 222 (lysine 222) is an N6-carboxylysine. Histidine 224 is a binding site for substrate. Positions 251 and 277 each coordinate Ni(2+). Histidine 325 acts as the Proton donor in catalysis. Residue aspartate 365 participates in Ni(2+) binding.

The protein belongs to the metallo-dependent hydrolases superfamily. Urease alpha subunit family. Heterotrimer of UreA (gamma), UreB (beta) and UreC (alpha) subunits. Three heterotrimers associate to form the active enzyme. Ni cation serves as cofactor. Post-translationally, carboxylation allows a single lysine to coordinate two nickel ions.

The protein localises to the cytoplasm. The enzyme catalyses urea + 2 H2O + H(+) = hydrogencarbonate + 2 NH4(+). It participates in nitrogen metabolism; urea degradation; CO(2) and NH(3) from urea (urease route): step 1/1. This chain is Urease subunit alpha, found in Gloeothece citriformis (strain PCC 7424) (Cyanothece sp. (strain PCC 7424)).